The primary structure comprises 374 residues: Flagellar P-ring protein 1 (374 aa).

An N-terminal signal peptide occupies residues 1 to 26; the sequence is MVPNLMVIKKHLIGLLLILCPLSLQA.

Belongs to the FlgI family. As to quaternary structure, the basal body constitutes a major portion of the flagellar organelle and consists of four rings (L,P,S, and M) mounted on a central rod.

It is found in the periplasm. The protein localises to the bacterial flagellum basal body. In terms of biological role, assembles around the rod to form the L-ring and probably protects the motor/basal body from shearing forces during rotation. This Photobacterium profundum (strain SS9) protein is Flagellar P-ring protein 1.